Here is a 72-residue protein sequence, read N- to C-terminus: UPF0352 protein NTHI1007 (72 aa).

Belongs to the UPF0352 family.

The chain is UPF0352 protein NTHI1007 from Haemophilus influenzae (strain 86-028NP).